The primary structure comprises 437 residues: Elongation factor 1-gamma (437 aa).

A2 is subject to N-acetylalanine. One can recognise a GST N-terminal domain in the interval 2–87 (AAGTLYTYPE…YVSNEELRGS (86 aa)). In terms of domain architecture, GST C-terminal spans 88–216 (TPEAAAQVVQ…VKLCEKMAQF (129 aa)). An N6-acetyllysine mark is found at K147 and K212. Residues 221-254 (FAESQPKKDTPRKEKGSREEKQKPQTERKEEKKA) are compositionally biased toward basic and acidic residues. Positions 221 to 268 (FAESQPKKDTPRKEKGSREEKQKPQTERKEEKKAAAPAPEEEMDECEQ) are disordered. K253 participates in a covalent cross-link: Glycyl lysine isopeptide (Lys-Gly) (interchain with G-Cter in SUMO1). An EF-1-gamma C-terminal domain is found at 276–437 (AKDPFAHLPK…KAVNQGKIFK (162 aa)). K285 participates in a covalent cross-link: Glycyl lysine isopeptide (Lys-Gly) (interchain with G-Cter in SUMO2). K401 carries the post-translational modification N6-acetyllysine. K434 carries the N6-acetyllysine; alternate modification. K434 is modified (N6-malonyllysine; alternate).

As to quaternary structure, EF-1 is composed of four subunits: alpha, beta, delta, and gamma.

In terms of biological role, probably plays a role in anchoring the complex to other cellular components. This is Elongation factor 1-gamma (Eef1g) from Rattus norvegicus (Rat).